The sequence spans 431 residues: Dihydroorotase (431 aa).

The Zn(2+) site is built by His-55 and His-57. Substrate-binding positions include 57–59 and Asn-89; that span reads HFR. Positions 139, 169, 223, and 290 each coordinate Zn(2+). N6-carboxylysine is present on Lys-139. Residue Asp-290 is part of the active site. Residues His-294 and 308–309 each bind substrate; that span reads PG.

It belongs to the metallo-dependent hydrolases superfamily. DHOase family. Class I DHOase subfamily. Requires Zn(2+) as cofactor.

The enzyme catalyses (S)-dihydroorotate + H2O = N-carbamoyl-L-aspartate + H(+). Its pathway is pyrimidine metabolism; UMP biosynthesis via de novo pathway; (S)-dihydroorotate from bicarbonate: step 3/3. Its function is as follows. Catalyzes the reversible cyclization of carbamoyl aspartate to dihydroorotate. This is Dihydroorotase from Methanothermobacter thermautotrophicus (strain ATCC 29096 / DSM 1053 / JCM 10044 / NBRC 100330 / Delta H) (Methanobacterium thermoautotrophicum).